The chain runs to 235 residues: 5'-methylthioadenosine/S-adenosylhomocysteine nucleosidase (235 aa).

Glu-13 (proton acceptor) is an active-site residue. Residues Gly-79, Met-154, and 175-176 each bind substrate; that span reads ME. Asp-199 acts as the Proton donor in catalysis.

This sequence belongs to the PNP/UDP phosphorylase family. MtnN subfamily.

The catalysed reaction is S-adenosyl-L-homocysteine + H2O = S-(5-deoxy-D-ribos-5-yl)-L-homocysteine + adenine. It catalyses the reaction S-methyl-5'-thioadenosine + H2O = 5-(methylsulfanyl)-D-ribose + adenine. The enzyme catalyses 5'-deoxyadenosine + H2O = 5-deoxy-D-ribose + adenine. The protein operates within amino-acid biosynthesis; L-methionine biosynthesis via salvage pathway; S-methyl-5-thio-alpha-D-ribose 1-phosphate from S-methyl-5'-thioadenosine (hydrolase route): step 1/2. Catalyzes the irreversible cleavage of the glycosidic bond in both 5'-methylthioadenosine (MTA) and S-adenosylhomocysteine (SAH/AdoHcy) to adenine and the corresponding thioribose, 5'-methylthioribose and S-ribosylhomocysteine, respectively. Also cleaves 5'-deoxyadenosine, a toxic by-product of radical S-adenosylmethionine (SAM) enzymes, into 5-deoxyribose and adenine. The chain is 5'-methylthioadenosine/S-adenosylhomocysteine nucleosidase from Chromohalobacter salexigens (strain ATCC BAA-138 / DSM 3043 / CIP 106854 / NCIMB 13768 / 1H11).